A 215-amino-acid polypeptide reads, in one-letter code: Interleukin-12 subunit alpha (215 aa).

The N-terminal stretch at 1-22 (MCQSRYLLFLATLALLNHLSLA) is a signal peptide. 3 disulfide bridges follow: cysteine 33-cysteine 106, cysteine 60-cysteine 192, and cysteine 81-cysteine 119. A glycan (N-linked (GlcNAc...) asparagine) is linked at asparagine 89.

The protein belongs to the IL-6 superfamily. As to quaternary structure, heterodimer with IL12B; disulfide-linked. This heterodimer is known as interleukin IL-12. Heterodimer with EBI3/IL27B; not disulfide-linked. This heterodimer is known as interleukin IL-35. Interacts with NBR1; this interaction promotes IL-12 secretion.

Its subcellular location is the secreted. Functionally, heterodimerizes with IL12B to form the IL-12 cytokine or with EBI3/IL27B to form the IL-35 cytokine. IL-12 is primarily produced by professional antigen-presenting cells (APCs) such as B-cells and dendritic cells (DCs) as well as macrophages and granulocytes and regulates T-cell and natural killer-cell responses, induces the production of interferon-gamma (IFN-gamma), favors the differentiation of T-helper 1 (Th1) cells and is an important link between innate resistance and adaptive immunity. Mechanistically, exerts its biological effects through a receptor composed of IL12R1 and IL12R2 subunits. Binding to the receptor results in the rapid tyrosine phosphorylation of a number of cellular substrates including the JAK family kinases TYK2 and JAK2. In turn, recruited STAT4 gets phosphorylated and translocates to the nucleus where it regulates cytokine/growth factor responsive genes. As part of IL-35, plays essential roles in maintaining the immune homeostasis of the liver microenvironment and also functions as an immune-suppressive cytokine. Mediates biological events through unconventional receptors composed of IL12RB2 and gp130/IL6ST heterodimers or homodimers. Signaling requires the transcription factors STAT1 and STAT4, which form a unique heterodimer that binds to distinct DNA sites. This chain is Interleukin-12 subunit alpha (Il12a), found in Mus musculus (Mouse).